Consider the following 984-residue polypeptide: Glutamate [NMDA] receptor subunit 1 (984 aa).

A signal peptide spans M1–A24. Topologically, residues Q25–S570 are extracellular. N-linked (GlcNAc...) asparagine glycosylation is found at N255, N311, N342, N394, N451, N478, and N498. Glycine is bound by residues P527–T529 and R534. A helical membrane pass occupies residues N571–L591. The Cytoplasmic segment spans residues D592–W648. The helical transmembrane segment at A649–L669 threads the bilayer. The Extracellular portion of the chain corresponds to E670–N828. The N-linked (GlcNAc...) asparagine glycan is linked to N690. Glycine-binding residues include S700 and D744. The chain crosses the membrane as a helical span at residues M829–I849. At E850–V984 the chain is on the cytoplasmic side. Residues K947–V984 are disordered. A compositionally biased stretch (polar residues) spans G974 to V984.

It belongs to the glutamate-gated ion channel (TC 1.A.10.1) family. In terms of assembly, forms a heteromeric NMDA channel with Nmdar2.

The protein localises to the cell membrane. Its subcellular location is the postsynaptic cell membrane. It localises to the postsynaptic density. Functionally, NMDA receptor subtype of glutamate-gated ion channels with high calcium permeability and voltage-dependent sensitivity to magnesium. Mediated by glycine. This protein plays a key role in synaptic plasticity, synaptogenesis, excitotoxicity, memory acquisition and learning. It mediates neuronal functions in glutamate neurotransmission. Is involved in the cell surface targeting of NMDA receptors. Plays a role in associative learning and in long-term memory consolidation. This chain is Glutamate [NMDA] receptor subunit 1, found in Drosophila virilis (Fruit fly).